Reading from the N-terminus, the 387-residue chain is Mannose-6-phosphate isomerase (387 aa).

The protein belongs to the N-acylglucosamine 2-epimerase family.

The catalysed reaction is D-mannose 6-phosphate = D-fructose 6-phosphate. This Rhizobium meliloti (strain 1021) (Ensifer meliloti) protein is Mannose-6-phosphate isomerase (pmi).